A 358-amino-acid chain; its full sequence is Probable tartrate dehydrogenase/decarboxylase TtuC' (358 aa).

Mn(2+) contacts are provided by aspartate 222, aspartate 246, and aspartate 250.

This sequence belongs to the isocitrate and isopropylmalate dehydrogenases family. It depends on Mg(2+) as a cofactor. Mn(2+) serves as cofactor. K(+) is required as a cofactor.

The protein resides in the cytoplasm. It catalyses the reaction tartrate + NAD(+) = 2-hydroxy-3-oxosuccinate + NADH + H(+). The catalysed reaction is (2R,3S)-tartrate + NAD(+) = 2-hydroxy-3-oxosuccinate + NADH + H(+). The enzyme catalyses (2R,3R)-tartrate + NAD(+) = 2-hydroxy-3-oxosuccinate + NADH + H(+). It carries out the reaction (2R,3R)-tartrate + H(+) = (R)-glycerate + CO2. It catalyses the reaction (R)-malate + NAD(+) = pyruvate + CO2 + NADH. It functions in the pathway carbohydrate acid metabolism; tartrate degradation; 2-hydroxy-3-oxosuccinate from L-tartrate: step 1/1. It participates in carbohydrate acid metabolism; tartrate degradation; 2-hydroxy-3-oxosuccinate from meso-tartrate: step 1/1. Its pathway is carbohydrate acid metabolism; tartrate degradation; D-glycerate from L-tartrate: step 1/1. Has multiple catalytic activities. Apart from catalyzing the oxidation of (+)-tartrate to oxaloglycolate, also converts meso-tartrate to D-glycerate and catalyzes the oxidative decarboxylation of D-malate to pyruvate. This is Probable tartrate dehydrogenase/decarboxylase TtuC' (ttuC') from Agrobacterium vitis (Rhizobium vitis).